The primary structure comprises 462 residues: Chromosomal replication initiator protein DnaA (462 aa).

The domain I, interacts with DnaA modulators stretch occupies residues 1 to 83; sequence MSLSLWQQCL…LRFEVGSKPA (83 aa). The domain II stretch occupies residues 83–125; the sequence is AARAHNNPVTASVSAPVAPVTRSAPMRPSWDNSPAQPELSYRS. Residues 104-125 are disordered; the sequence is RSAPMRPSWDNSPAQPELSYRS. The segment covering 112–125 has biased composition (polar residues); that stretch reads WDNSPAQPELSYRS. The segment at 126-342 is domain III, AAA+ region; that stretch reads NVNPKHTFDN…GALNRVIANA (217 aa). Residues Gly-170, Gly-172, Lys-173, and Thr-174 each coordinate ATP. Positions 343–462 are domain IV, binds dsDNA; that stretch reads NFTGRAITID…FSNLIRTLSS (120 aa).

It belongs to the DnaA family. As to quaternary structure, oligomerizes as a right-handed, spiral filament on DNA at oriC.

It localises to the cytoplasm. Its function is as follows. Plays an essential role in the initiation and regulation of chromosomal replication. ATP-DnaA binds to the origin of replication (oriC) to initiate formation of the DNA replication initiation complex once per cell cycle. Binds the DnaA box (a 9 base pair repeat at the origin) and separates the double-stranded (ds)DNA. Forms a right-handed helical filament on oriC DNA; dsDNA binds to the exterior of the filament while single-stranded (ss)DNA is stabiized in the filament's interior. The ATP-DnaA-oriC complex binds and stabilizes one strand of the AT-rich DNA unwinding element (DUE), permitting loading of DNA polymerase. After initiation quickly degrades to an ADP-DnaA complex that is not apt for DNA replication. Binds acidic phospholipids. This chain is Chromosomal replication initiator protein DnaA, found in Yersinia pseudotuberculosis serotype O:1b (strain IP 31758).